The primary structure comprises 525 residues: GMP synthase [glutamine-hydrolyzing] (525 aa).

The 190-residue stretch at 16–205 (PVLVVDFGAQ…LHDFAGLGAQ (190 aa)) folds into the Glutamine amidotransferase type-1 domain. Catalysis depends on Cys93, which acts as the Nucleophile. Active-site residues include His179 and Glu181. The GMPS ATP-PPase domain occupies 206–399 (WTPANIANAL…LGLPEEIVAR (194 aa)). 233-239 (SGGVDSA) contributes to the ATP binding site.

In terms of assembly, homodimer.

It carries out the reaction XMP + L-glutamine + ATP + H2O = GMP + L-glutamate + AMP + diphosphate + 2 H(+). The protein operates within purine metabolism; GMP biosynthesis; GMP from XMP (L-Gln route): step 1/1. In terms of biological role, catalyzes the synthesis of GMP from XMP. The sequence is that of GMP synthase [glutamine-hydrolyzing] (guaA) from Mycobacterium tuberculosis (strain CDC 1551 / Oshkosh).